A 704-amino-acid chain; its full sequence is Elongation factor G (704 aa).

The region spanning 8–291 (DKVRNIGIMA…AVVDYLASPL (284 aa)) is the tr-type G domain. GTP-binding positions include 17-24 (AHIDAGKT), 90-94 (DTPGH), and 144-147 (NKMD).

Belongs to the TRAFAC class translation factor GTPase superfamily. Classic translation factor GTPase family. EF-G/EF-2 subfamily.

It localises to the cytoplasm. Its function is as follows. Catalyzes the GTP-dependent ribosomal translocation step during translation elongation. During this step, the ribosome changes from the pre-translocational (PRE) to the post-translocational (POST) state as the newly formed A-site-bound peptidyl-tRNA and P-site-bound deacylated tRNA move to the P and E sites, respectively. Catalyzes the coordinated movement of the two tRNA molecules, the mRNA and conformational changes in the ribosome. This Chlorobium luteolum (strain DSM 273 / BCRC 81028 / 2530) (Pelodictyon luteolum) protein is Elongation factor G.